The chain runs to 535 residues: MATCIWLRSCGARRLGSTFPGCRLRPRAGGLVPASGPAPGPAQLRCYAGRLAGLSAALLRTDSFVGGRWLPAAATFPVQDPASGAALGMVADCGVREARAAVRAAYEAFCRWREVSAKERSSLLRKWYNLMIQNKDDLARIITAESGKPLKEAHGEILYSAFFLEWFSEEARRVYGDIIHTPAKDRRALVLKQPIGVAAVITPWNFPSAMITRKVGAALAAGCTVVVKPAEDTPFSALALAELASQAGIPSGVYNVIPCSRKNAKEVGEAICTDPLVSKISFTGSTTTGKILLHHAANSVKRVSMELGGLAPFIVFDSANVDQAVAGAMASKFRNTGQTCVCSNQFLVQRGIHDAFVKAFAEAMKKNLRVGNGFEEGTTQGPLINEKAVEKVEKQVNDAVSKGATVVTGGKRHQLGKNFFEPTLLCNVTQDMLCTHEETFGPLAPVIKFDTEEEAIAIANAADVGLAGYFYSQDPAQIWRVAEQLEVGMVGVNEGLISSVECPFGGVKQSGLGREGSKYGIDEYLELKYVCYGGL.

A mitochondrion-targeting transit peptide spans 1 to 47 (MATCIWLRSCGARRLGSTFPGCRLRPRAGGLVPASGPAPGPAQLRCY). At lysine 126 the chain carries N6-acetyllysine; alternate. Lysine 126 bears the N6-succinyllysine; alternate mark. N6-succinyllysine is present on residues lysine 135 and lysine 184. Residue 202–204 (TPW) coordinates NAD(+). Arginine 213 is a substrate binding site. 228–231 (KPAE) is an NAD(+) binding site. N6-acetyllysine; alternate is present on lysine 265. Position 265 is an N6-succinyllysine; alternate (lysine 265). NAD(+)-binding positions include 284–289 (GSTTTG) and glutamate 306. The Proton acceptor role is filled by glutamate 306. Arginine 334 is a substrate binding site. Cysteine 340 functions as the Nucleophile in the catalytic mechanism. An intrachain disulfide couples cysteine 340 to cysteine 342. Lysine 365 is subject to N6-acetyllysine. At lysine 402 the chain carries N6-succinyllysine. Residue lysine 411 is modified to N6-acetyllysine. 438–440 (ETF) lines the NAD(+) pocket. Serine 498 provides a ligand contact to substrate. Position 499 is a phosphoserine (serine 499).

This sequence belongs to the aldehyde dehydrogenase family. Homotetramer. Brain, pancreas, heart, liver, skeletal muscle and kidney. Lower in placenta.

Its subcellular location is the mitochondrion. It catalyses the reaction succinate semialdehyde + NAD(+) + H2O = succinate + NADH + 2 H(+). Its pathway is amino-acid degradation; 4-aminobutanoate degradation. Redox-regulated. Inhibited under oxydizing conditions. Inhibited by hydrogen peroxide H(2)O(2). Its function is as follows. Catalyzes one step in the degradation of the inhibitory neurotransmitter gamma-aminobutyric acid (GABA). The chain is Succinate-semialdehyde dehydrogenase, mitochondrial from Homo sapiens (Human).